Consider the following 51-residue polypeptide: Insulin (51 aa).

3 disulfide bridges follow: C7–C37, C19–C50, and C36–C41.

It belongs to the insulin family. In terms of assembly, heterodimer of a B chain and an A chain linked by two disulfide bonds.

It localises to the secreted. Insulin decreases blood glucose concentration. It increases cell permeability to monosaccharides, amino acids and fatty acids. It accelerates glycolysis, the pentose phosphate cycle, and glycogen synthesis in liver. This chain is Insulin (INS), found in Hystrix cristata (North African crested porcupine).